The following is a 461-amino-acid chain: tRNA modification GTPase MnmE (461 aa).

Residues R22, E87, and R126 each coordinate (6S)-5-formyl-5,6,7,8-tetrahydrofolate. Positions 223–382 constitute a TrmE-type G domain; it reads GLSTVILGRP…LEEAIAALFF (160 aa). N233 contacts K(+). Residues 233–238, 252–258, and 277–280 contribute to the GTP site; these read NVGKSS, TDIAGTT, and DTAG. A Mg(2+)-binding site is contributed by S237. The K(+) site is built by T252, I254, and T257. T258 lines the Mg(2+) pocket. Residue K461 coordinates (6S)-5-formyl-5,6,7,8-tetrahydrofolate.

The protein belongs to the TRAFAC class TrmE-Era-EngA-EngB-Septin-like GTPase superfamily. TrmE GTPase family. In terms of assembly, homodimer. Heterotetramer of two MnmE and two MnmG subunits. K(+) serves as cofactor.

It localises to the cytoplasm. Functionally, exhibits a very high intrinsic GTPase hydrolysis rate. Involved in the addition of a carboxymethylaminomethyl (cmnm) group at the wobble position (U34) of certain tRNAs, forming tRNA-cmnm(5)s(2)U34. This chain is tRNA modification GTPase MnmE, found in Lysinibacillus sphaericus (strain C3-41).